The sequence spans 427 residues: Inward rectifier potassium channel 2 (427 aa).

Residues 1 to 81 are Cytoplasmic-facing; the sequence is MGSVRTNRYS…IFTTCVDIRW (81 aa). The residue at position 76 (C76) is an S-nitrosocysteine. A helical transmembrane segment spans residues 82–106; the sequence is RWMLVIFCLAFVLSWLFFGCVFWLI. At 107-128 the chain is on the extracellular side; sequence ALLHGDLDASKESKACVSEVNS. The helical; Pore-forming intramembrane region spans 129–140; sequence FTAAFLFSIETQ. The segment at residues 141 to 147 is an intramembrane region (pore-forming); that stretch reads TTIGYGF. Residues 142–147 carry the Selectivity filter motif; it reads TIGYGF. The Extracellular portion of the chain corresponds to 148 to 156; it reads RCVTDECPI. A helical transmembrane segment spans residues 157-178; that stretch reads AVFMVVFQSIVGCIIDAFIIGA. Residues 179–427 are Cytoplasmic-facing; the sequence is VMAKMAKPKK…PRPLRRESEI (249 aa). A polyphosphoinositide (PIP2)-binding region spans residues 181-208; sequence AKMAKPKKRNETLVFSHNAVIAMRDGKL. The interval 383–427 is disordered; that stretch reads TSKEEEDSENGVPESTSTDSPPGIDLHNQASVPLEPRPLRRESEI. A PDZ-binding motif is present at residues 425 to 427; that stretch reads SEI.

It belongs to the inward rectifier-type potassium channel (TC 1.A.2.1) family. KCNJ2 subfamily. In terms of assembly, homotetramer. Homomultimeric and heteromultimeric association with KCNJ4/Kir2.3. Can form heteromeric channels with Kir2.6/KCNJ18. Associates, via its PDZ-recognition domain, with a complex containing LIN7A, LIN7B, LIN7C, DLG1, CASK and APBA1. S-nitrosylation increases the open probability and inward rectifying currents. Prominently expressed in the central nervous system. Also found in other excitable tissues such as heart and skeletal muscle.

It localises to the cell membrane. The protein localises to the sarcolemma. It is found in the T-tubule. It carries out the reaction K(+)(in) = K(+)(out). Activated by phosphatidylinositol 4,5 biphosphate (PtdIns(4,5)P2). Functionally, inward rectifier potassium channels are characterized by a greater tendency to allow potassium to flow into the cell rather than out of it. Their voltage dependence is regulated by the concentration of extracellular potassium; as external potassium is raised, the voltage range of the channel opening shifts to more positive voltages. The inward rectification is mainly due to the blockage of outward current by internal magnesium. Can be blocked by extracellular barium and cesium. Probably participates in establishing action potential waveform and excitability of neuronal and muscle tissues. The sequence is that of Inward rectifier potassium channel 2 (Kcnj2) from Rattus norvegicus (Rat).